The following is a 239-amino-acid chain: Cyclo(L-leucyl-L-phenylalanyl) synthase (239 aa).

Ser37 functions as the Nucleophile in the catalytic mechanism. Substrate-binding positions include Asn40, 178-182 (YVLAE), and Tyr202.

The protein belongs to the CDPS family. Monomer.

It catalyses the reaction L-phenylalanyl-tRNA(Phe) + L-leucyl-tRNA(Leu) = cyclo(L-phenylalanyl-L-leucyl) + tRNA(Phe) + tRNA(Leu) + H(+). In terms of biological role, involved in the biosynthesis of albonoursin (cyclo[(alpha,beta-dehydro-Phe)-(alpha,beta-dehydro-Leu)]), an antibacterial peptide. It uses activated amino acids in the form of aminoacyl-tRNAs (aa-tRNAs) as substrates to catalyze the ATP-independent formation of cyclodipeptides which are intermediates in diketopiperazine (DKP) biosynthetic pathways. Catalyzes the formation of cyclo(L-Phe-L-Leu) (cFL) as major products from L-L-phenylalanyl-tRNA(Phe) and L-leucyl-tRNA(Leu). AlbC can also incorporate various nonpolar residues, such as L-phenylalanine, L-leucine, L-tyrosine and L-methionine, and to a much lesser extent L-alanine and L-valine, into cyclodipeptides. Indeed, ten possible cyclodipeptides composed of L-phenylalanine, L-leucine, L-tyrosine and L-methionine are all synthesized to detectable amounts by AlbC. This chain is Cyclo(L-leucyl-L-phenylalanyl) synthase (albC), found in Streptomyces noursei (Streptomyces albulus).